The primary structure comprises 380 residues: Beta sliding clamp (380 aa).

It belongs to the beta sliding clamp family. In terms of assembly, forms a ring-shaped head-to-tail homodimer around DNA which binds and tethers DNA polymerases and other proteins to the DNA. The DNA replisome complex has a single clamp-loading complex (3 tau and 1 each of delta, delta', psi and chi subunits) which binds 3 Pol III cores (1 core on the leading strand and 2 on the lagging strand) each with a beta sliding clamp dimer. Additional proteins in the replisome are other copies of gamma, psi and chi, Ssb, DNA helicase and RNA primase.

It is found in the cytoplasm. Confers DNA tethering and processivity to DNA polymerases and other proteins. Acts as a clamp, forming a ring around DNA (a reaction catalyzed by the clamp-loading complex) which diffuses in an ATP-independent manner freely and bidirectionally along dsDNA. Initially characterized for its ability to contact the catalytic subunit of DNA polymerase III (Pol III), a complex, multichain enzyme responsible for most of the replicative synthesis in bacteria; Pol III exhibits 3'-5' exonuclease proofreading activity. The beta chain is required for initiation of replication as well as for processivity of DNA replication. The chain is Beta sliding clamp (dnaN) from Lactococcus lactis subsp. lactis (strain IL1403) (Streptococcus lactis).